A 122-amino-acid chain; its full sequence is Fluoride-specific ion channel FluC (122 aa).

Transmembrane regions (helical) follow at residues 6 to 26 (LVVGFGGFIGAILRMLSINLV), 33 to 53 (SISFGTLFVNVLGSFIIGLLF), 60 to 80 (GLSPLLKSFISTGFLGAFTTF), and 101 to 121 (LNIILNVFLCLFAAWLGFLIF). Positions 75 and 78 each coordinate Na(+).

This sequence belongs to the fluoride channel Fluc/FEX (TC 1.A.43) family.

The protein resides in the cell inner membrane. It catalyses the reaction fluoride(in) = fluoride(out). Na(+) is not transported, but it plays an essential structural role and its presence is essential for fluoride channel function. In terms of biological role, fluoride-specific ion channel. Important for reducing fluoride concentration in the cell, thus reducing its toxicity. This chain is Fluoride-specific ion channel FluC, found in Campylobacter jejuni subsp. jejuni serotype O:2 (strain ATCC 700819 / NCTC 11168).